Consider the following 128-residue polypeptide: Glycine cleavage system H protein (128 aa).

Residues 22–104 enclose the Lipoyl-binding domain; sequence TVLVGITDYA…YGEGWIFRLK (83 aa). Lys63 carries the N6-lipoyllysine modification.

It belongs to the GcvH family. In terms of assembly, the glycine cleavage system is composed of four proteins: P, T, L and H. Monomer. (R)-lipoate serves as cofactor.

Its function is as follows. The glycine cleavage system catalyzes the degradation of glycine. The H protein shuttles the methylamine group of glycine from the P protein to the T protein. The polypeptide is Glycine cleavage system H protein (Thermus thermophilus (strain ATCC 27634 / DSM 579 / HB8)).